Reading from the N-terminus, the 554-residue chain is Propanediol dehydratase large subunit (554 aa).

Belongs to the diol/glycerol dehydratase large subunit family. As to quaternary structure, the propanediol dehydratase enzyme is a heterotrimeric complex composed of a large (PduC), a medium (PduD) and a small (PduE) subunit. Adenosylcob(III)alamin serves as cofactor.

It localises to the bacterial microcompartment. The enzyme catalyses propane-1,2-diol = propanal + H2O. It participates in polyol metabolism; 1,2-propanediol degradation. With respect to regulation, inhibited by glycerol. In terms of biological role, part of the PduCDE complex that catalyzes the dehydration of 1,2-propanediol (1,2-PD) to propionaldehyde. Required for S.typhimurium growth on 1,2-PD as the sole carbon and energy source. This subunit is directly targeted to the BMC. Functionally, the 1,2-PD-specific bacterial microcompartment (BMC) concentrates low levels of 1,2-PD catabolic enzymes, concentrates volatile reaction intermediates thus enhancing pathway flux and keeps the level of toxic, mutagenic propionaldehyde low. This chain is Propanediol dehydratase large subunit, found in Salmonella typhimurium (strain LT2 / SGSC1412 / ATCC 700720).